The sequence spans 85 residues: DNA-directed RNA polymerase subunit omega (85 aa).

The protein belongs to the RNA polymerase subunit omega family. As to quaternary structure, the RNAP catalytic core consists of 2 alpha, 1 beta, 1 beta' and 1 omega subunit. When a sigma factor is associated with the core the holoenzyme is formed, which can initiate transcription.

It catalyses the reaction RNA(n) + a ribonucleoside 5'-triphosphate = RNA(n+1) + diphosphate. Promotes RNA polymerase assembly. Latches the N- and C-terminal regions of the beta' subunit thereby facilitating its interaction with the beta and alpha subunits. The sequence is that of DNA-directed RNA polymerase subunit omega from Latilactobacillus sakei subsp. sakei (strain 23K) (Lactobacillus sakei subsp. sakei).